The primary structure comprises 434 residues: Trigger factor (434 aa).

In terms of domain architecture, PPIase FKBP-type spans 161 to 246 (EDRVTVDFSG…LKKVEERELP (86 aa)).

It belongs to the FKBP-type PPIase family. Tig subfamily.

The protein localises to the cytoplasm. The enzyme catalyses [protein]-peptidylproline (omega=180) = [protein]-peptidylproline (omega=0). Functionally, involved in protein export. Acts as a chaperone by maintaining the newly synthesized protein in an open conformation. Functions as a peptidyl-prolyl cis-trans isomerase. The protein is Trigger factor of Serratia proteamaculans (strain 568).